A 383-amino-acid polypeptide reads, in one-letter code: ATP phosphoribosyltransferase regulatory subunit (383 aa).

Belongs to the class-II aminoacyl-tRNA synthetase family. HisZ subfamily. As to quaternary structure, heteromultimer composed of HisG and HisZ subunits.

It localises to the cytoplasm. The protein operates within amino-acid biosynthesis; L-histidine biosynthesis; L-histidine from 5-phospho-alpha-D-ribose 1-diphosphate: step 1/9. Required for the first step of histidine biosynthesis. May allow the feedback regulation of ATP phosphoribosyltransferase activity by histidine. This is ATP phosphoribosyltransferase regulatory subunit from Cupriavidus necator (strain ATCC 17699 / DSM 428 / KCTC 22496 / NCIMB 10442 / H16 / Stanier 337) (Ralstonia eutropha).